A 99-amino-acid chain; its full sequence is Large ribosomal subunit protein uL23 (99 aa).

This sequence belongs to the universal ribosomal protein uL23 family. As to quaternary structure, part of the 50S ribosomal subunit. Contacts protein L29, and trigger factor when it is bound to the ribosome.

In terms of biological role, one of the early assembly proteins it binds 23S rRNA. One of the proteins that surrounds the polypeptide exit tunnel on the outside of the ribosome. Forms the main docking site for trigger factor binding to the ribosome. The sequence is that of Large ribosomal subunit protein uL23 from Hydrogenobaculum sp. (strain Y04AAS1).